We begin with the raw amino-acid sequence, 113 residues long: Iron-sulfur cluster insertion protein ErpA (113 aa).

Residues cysteine 41, cysteine 105, and cysteine 107 each coordinate iron-sulfur cluster.

It belongs to the HesB/IscA family. In terms of assembly, homodimer. It depends on iron-sulfur cluster as a cofactor.

Functionally, required for insertion of 4Fe-4S clusters for at least IspG. In Actinobacillus pleuropneumoniae serotype 5b (strain L20), this protein is Iron-sulfur cluster insertion protein ErpA.